Here is a 1058-residue protein sequence, read N- to C-terminus: Isoleucine--tRNA ligase (1058 aa).

The short motif at 48-58 is the 'HIGH' region element; it reads PYTTGHIHLGT. Residues 596-600 carry the 'KMSKS' region motif; sequence KMSKS. Lysine 599 is an ATP binding site.

The protein belongs to the class-I aminoacyl-tRNA synthetase family. IleS type 2 subfamily. In terms of assembly, monomer. Zn(2+) is required as a cofactor.

It is found in the cytoplasm. It catalyses the reaction tRNA(Ile) + L-isoleucine + ATP = L-isoleucyl-tRNA(Ile) + AMP + diphosphate. Its function is as follows. Catalyzes the attachment of isoleucine to tRNA(Ile). As IleRS can inadvertently accommodate and process structurally similar amino acids such as valine, to avoid such errors it has two additional distinct tRNA(Ile)-dependent editing activities. One activity is designated as 'pretransfer' editing and involves the hydrolysis of activated Val-AMP. The other activity is designated 'posttransfer' editing and involves deacylation of mischarged Val-tRNA(Ile). This Methanosarcina acetivorans (strain ATCC 35395 / DSM 2834 / JCM 12185 / C2A) protein is Isoleucine--tRNA ligase.